Here is a 273-residue protein sequence, read N- to C-terminus: Large ribosomal subunit protein uL2 (273 aa).

Disordered stretches follow at residues 34–54 (LEKK…TRHI) and 223–273 (VAMN…RRRK).

Belongs to the universal ribosomal protein uL2 family. Part of the 50S ribosomal subunit. Forms a bridge to the 30S subunit in the 70S ribosome.

In terms of biological role, one of the primary rRNA binding proteins. Required for association of the 30S and 50S subunits to form the 70S ribosome, for tRNA binding and peptide bond formation. It has been suggested to have peptidyltransferase activity; this is somewhat controversial. Makes several contacts with the 16S rRNA in the 70S ribosome. This Azotobacter vinelandii (strain DJ / ATCC BAA-1303) protein is Large ribosomal subunit protein uL2.